The chain runs to 156 residues: MIP18 family protein galla-2 (156 aa).

It belongs to the MIP18 family. As to quaternary structure, component of the CGX complex composed of crb, galla (galla-1 or galla-2) and Xpd. Interacts with crb (via intracellular domain). Also able to interact with Xpd in the absence of crb. Interacts with Mms19.

Functionally, component of the crb-galla-Xpd (CGX) complex which is essential for proper mitotic chromosome segregation in early embryos. The CGX complex is also required for cell proliferation in developing wing disks. In the CGX complex, acts with crb to recruit Xpd thus forming the functional complex. The protein is MIP18 family protein galla-2 of Drosophila melanogaster (Fruit fly).